The following is a 260-amino-acid chain: Hydroxyethylthiazole kinase (260 aa).

M49 is a binding site for substrate. ATP is bound by residues R124 and T170. A substrate-binding site is contributed by G197.

This sequence belongs to the Thz kinase family. Requires Mg(2+) as cofactor.

The catalysed reaction is 5-(2-hydroxyethyl)-4-methylthiazole + ATP = 4-methyl-5-(2-phosphooxyethyl)-thiazole + ADP + H(+). It functions in the pathway cofactor biosynthesis; thiamine diphosphate biosynthesis; 4-methyl-5-(2-phosphoethyl)-thiazole from 5-(2-hydroxyethyl)-4-methylthiazole: step 1/1. Functionally, catalyzes the phosphorylation of the hydroxyl group of 4-methyl-5-beta-hydroxyethylthiazole (THZ). The sequence is that of Hydroxyethylthiazole kinase from Yersinia enterocolitica serotype O:8 / biotype 1B (strain NCTC 13174 / 8081).